The sequence spans 513 residues: MELENITENLSPIKIILQDIHSDNRVSLTLDKNVLCEKCPFFSKMFKGFKEQFEKIVVVKVPYVDITSKILKNFHGYKMEISDDWKSQIKLYMCYDYLGIKTDFPTKIKVQDYCFDELLDLIELNGYNEQTVKTLVGNLPVDNLEKLPIDFLTVMDQELVDFDIIAIDNNGVVSEVDCTMNTLKKIYEQSDCNFHVQYFEKTQKLMVLSSDNVSTGYNQNTIHTYEYNYKNDNYELKDKQPMTGKKYNHRIGGDRLEEEQQIIGKICFMKCNPEEDKLAFVIFNDGQNKIVTYDLDKKIYREVIRRNHITEICYSSNNKTVHIEKNNSVNSIYYNGILLFSENNILRYICHVNNDVIVFNEHCVNQKLNFVKTTRIPYYGSDIFRPIKNDSFGFNDDKIIYGTENSITDIKYKSDHIFIVSAKTIVVYSIFQSSVIKEICCGATNIKFIDRDRVIAYGINCPTNIYNISTGEKIKNIDYPNIKQLFILNNVKNYALKQRIKAILNSHTLKKLI.

Positions serine 11–aspartate 83 constitute a BTB domain.

The protein belongs to the mimivirus BTB/WD family.

The chain is Putative BTB/POZ domain-containing protein L55 from Acanthamoeba polyphaga (Amoeba).